The chain runs to 63 residues: Conotoxin Gm5.1 (63 aa).

Residues 1 to 21 (MRYLPVFVILLLLIASIPSDT) form the signal peptide. Residues 22–50 (VQLKTKDDMPLASFHGNGRRILRMLSNKR) constitute a propeptide that is removed on maturation.

It belongs to the conotoxin T superfamily. Contains 2 disulfide bonds that can be either 'C1-C3, C2-C4' or 'C1-C4, C2-C3', since these disulfide connectivities have been observed for conotoxins with cysteine framework V (for examples, see AC P0DQQ7 and AC P81755). Expressed by the venom duct.

It localises to the secreted. This is Conotoxin Gm5.1 from Conus gloriamaris (Glory-of-the-Sea cone).